Consider the following 1163-residue polypeptide: Ankyrin repeat-containing protein F37A4.4 (1163 aa).

An ANK repeat occupies 856 to 885 (YGNTALHVATRRGYQNLVEILIKHGADRSF). One can recognise a BRCT domain in the interval 929-1025 (LCVPEKFPVS…KLIEKDCDYL (97 aa)).

The chain is Ankyrin repeat-containing protein F37A4.4 from Caenorhabditis elegans.